Reading from the N-terminus, the 63-residue chain is Omega-conotoxin Eu1.6 (63 aa).

Positions Met1–Ser21 are cleaved as a signal peptide. Residues Phe22–Lys47 constitute a propeptide that is removed on maturation. 2 cysteine pairs are disulfide-bonded: Cys49–Cys55 and Cys50–Cys63. The segment at Ser51 to Pro53 is ser-Xaa-Pro motif, crucial for potent interaction with nAChR.

The protein belongs to the conotoxin A superfamily. In terms of tissue distribution, expressed by the venom duct.

It localises to the secreted. Its function is as follows. This amidated peptide potently and teversibly inhibits Cav2.2/CACNA1B. Steady-state inactivation is enhanced at hyperpolarized membrane potentials. Also shows a weak interaction at alpha-3-beta-4/ CHRNA3-CHRNB4 and alpha-7/CHRNA7 nAChRs subtypes. In vivo, exhibits a potent analgesic activity in rat partial sciatic nerve injury and chronic constriction injury models. In Conus eburneus (Ivory cone), this protein is Omega-conotoxin Eu1.6.